The chain runs to 36 residues: Phosphoglycerate kinase, chloroplastic (36 aa).

The (2R)-3-phosphoglycerate site is built by A22, D23, and N25.

This sequence belongs to the phosphoglycerate kinase family. As to quaternary structure, monomer. Requires Mg(2+) as cofactor.

Its subcellular location is the plastid. It is found in the chloroplast. It catalyses the reaction (2R)-3-phosphoglycerate + ATP = (2R)-3-phospho-glyceroyl phosphate + ADP. It functions in the pathway carbohydrate biosynthesis; Calvin cycle. The chain is Phosphoglycerate kinase, chloroplastic from Scenedesmus fuscus (Green alga).